Here is a 151-residue protein sequence, read N- to C-terminus: MPDLSHEASAKYWFEYLDPMIYRVITFMESVENWTLDGNPELEEAMKQLGQELDDIEKIDLGLLAEEDKFIRIVGNIKSGRGLRLLQAIDTVHPGSASRVLIHAEETSLSSSDPAGFFLKRNIVFERLRLLSRVFCQYRLKLVLRALEGDE.

As to quaternary structure, the T4BSS is a complex nanomachine composed of several subcomplexes. This subunit is part of the Type IV Coupling Complex (T4CC), a subcomplex composed of the DotLMNYZ core and the IcmSW-LvgA adapter subunits, linked by the C-terminal tail of DotL. Interacts with IcmS. IcmS and IcmW form a stable complex. Interaction with IcmS greatly enhances the stability of IcmW. Interacts directly with the type 4 coupling protein DotL. Interacts with LvgA. Interacts with effector proteins.

The protein resides in the cytoplasm. With respect to regulation, interaction with DotL is critical for the export of IcmSW-dependent substrates. Functionally, component of the Dot/Icm type IVB secretion system (T4BSS), which is used to inject bacterial effector proteins into eukaryotic host cells. Part of a subcomplex which recruits effector proteins and delivers them to the core transmembrane subcomplex. The IcmS/IcmW protein complex plays an important role in protein translocation by interacting with multiple Dot/Icm effector proteins to facilitate their translocation into host cells. Interaction promotes conformational changes in the effector protein, which may facilitate display of a C-terminal translocation signal. May maintain the substrates in a translocation competent form. Required for intracellular growth in host cells, replicative phagosome formation and phagosome trafficking. The protein is Type 4 adapter protein IcmW of Legionella pneumophila subsp. pneumophila (strain Philadelphia 1 / ATCC 33152 / DSM 7513).